A 209-amino-acid polypeptide reads, in one-letter code: MSRAATTRMGLLEVRARRAVAGKGARLLRAKREVLASELWKLVHDVLEGRARLDEALHRAVKALELAKALEGEERLASLALPAARAVPLAVTVRRVWGVPTPSVAAPPLVRAADQRGSSPVSWGPSGADAARHHEESLEVLLTIASKELHLARLGEEIRETSRRINALEQLVLPALRSEASRIAAALDERDREDAVRLRRFRARHPRPA.

It belongs to the V-ATPase D subunit family.

Produces ATP from ADP in the presence of a proton gradient across the membrane. The chain is V-type ATP synthase subunit D from Anaeromyxobacter dehalogenans (strain 2CP-1 / ATCC BAA-258).